Consider the following 632-residue polypeptide: ATP-dependent DNA helicase RecQ (632 aa).

The 169-residue stretch at 47-215 (IDATLMGKDS…LRHLNLQSPH (169 aa)) folds into the Helicase ATP-binding domain. Residue 60-67 (MATGNGKS) coordinates ATP. A DEAH box motif is present at residues 159–162 (DEAH). Residues 236–385 (PMEQLCRFVL…IEALKLQAIG (150 aa)) enclose the Helicase C-terminal domain. Residues cysteine 393, cysteine 410, cysteine 413, and cysteine 416 each coordinate Zn(2+). Residues 544–624 (AQYDKDLFAR…QQHKKVLTQH (81 aa)) form the HRDC domain.

Belongs to the helicase family. RecQ subfamily. Mg(2+) is required as a cofactor. It depends on Zn(2+) as a cofactor.

It catalyses the reaction Couples ATP hydrolysis with the unwinding of duplex DNA by translocating in the 3'-5' direction.. It carries out the reaction ATP + H2O = ADP + phosphate + H(+). Its function is as follows. An ATP-dependent DNA helicase which unwinds DNA in a 3'-5' direction. Plays a role in recombination. This Pasteurella multocida (strain Pm70) protein is ATP-dependent DNA helicase RecQ.